Reading from the N-terminus, the 180-residue chain is Napin (180 aa).

Residues 1–21 form the signal peptide; it reads MANKLFLVSATLAFFFLLTNA. 2 propeptides span residues 22–38 and 75–94; these read SIYRTIVEVDEDDATNP and PSWTLDGEFDFEDDMENPQG.

It belongs to the 2S seed storage albumins family. As to quaternary structure, the mature protein consists of a small and a large chain linked by disulfide bonds. Cotyledons and the axis.

Functionally, the small, basic, water-soluble napins are one of the two major kinds of storage proteins synthesized in the seed during its maturation. The sequence is that of Napin (NAP1) from Brassica napus (Rape).